We begin with the raw amino-acid sequence, 239 residues long: tRNA (guanine-N(7)-)-methyltransferase (239 aa).

S-adenosyl-L-methionine is bound by residues Glu69, Glu94, Asp121, and Asp144. Asp144 is an active-site residue. Lys148 provides a ligand contact to substrate. The interaction with RNA stretch occupies residues 150–155 (RHNKRR). Residues Asp180 and 217-220 (TKFE) contribute to the substrate site.

It belongs to the class I-like SAM-binding methyltransferase superfamily. TrmB family. In terms of assembly, monomer.

It carries out the reaction guanosine(46) in tRNA + S-adenosyl-L-methionine = N(7)-methylguanosine(46) in tRNA + S-adenosyl-L-homocysteine. It participates in tRNA modification; N(7)-methylguanine-tRNA biosynthesis. Catalyzes the formation of N(7)-methylguanine at position 46 (m7G46) in tRNA. In Yersinia pseudotuberculosis serotype O:1b (strain IP 31758), this protein is tRNA (guanine-N(7)-)-methyltransferase.